A 282-amino-acid polypeptide reads, in one-letter code: S-formylglutathione hydrolase (282 aa).

At Lys4 the chain carries N6-succinyllysine. The active-site Charge relay system is Ser149. N6-acetyllysine is present on Lys200. Catalysis depends on charge relay system residues Asp226 and His260.

The protein belongs to the esterase D family. In terms of assembly, homodimer.

It localises to the cytoplasm. Its subcellular location is the cytoplasmic vesicle. It catalyses the reaction S-formylglutathione + H2O = formate + glutathione + H(+). Serine hydrolase involved in the detoxification of formaldehyde. This Rattus norvegicus (Rat) protein is S-formylglutathione hydrolase (Esd).